Reading from the N-terminus, the 396-residue chain is MAKAKFERTKPHVNIGTIGHVDHGKTTLTAAISKVLYDKYPTLNEQRDFASIDSAPEEKQRGITINISHVEYQTEKRHYAHVDAPGHADYIKNMITGAAQMDGAILVVAATDGPMAQTREHVLLARQVGVPYLLVALNKSDMVEDEELLDLVEMEVRELLSSQEFDGDNAPVVRVSGLKALEGDPQWVKSVEDLMEAVDESVPDPIRDKDKPFLMPIEDVFTITGRGTVVTGRAERGTLAINSEVEIVGIRPIQKTTVTGIEMFHKQLDEAWAGENCGLLLRGIKREDVERGQVVVKPGSITPHTDFEANVYILSKDEGGRHNPFYSNYRPQFYFRTTDVTGVITLPEGTEMVMPGDNTEMTVALIQPIAMEDGLGFAIREGGRTVGSGRVTKIIK.

In terms of domain architecture, tr-type G spans 10–206 (KPHVNIGTIG…AVDESVPDPI (197 aa)). Residues 19-26 (GHVDHGKT) are G1. 19–26 (GHVDHGKT) provides a ligand contact to GTP. Threonine 26 contributes to the Mg(2+) binding site. A G2 region spans residues 62 to 66 (GITIN). A G3 region spans residues 83–86 (DAPG). GTP-binding positions include 83 to 87 (DAPGH) and 138 to 141 (NKSD). The G4 stretch occupies residues 138 to 141 (NKSD). The interval 176–178 (SGL) is G5.

This sequence belongs to the TRAFAC class translation factor GTPase superfamily. Classic translation factor GTPase family. EF-Tu/EF-1A subfamily. In terms of assembly, monomer.

The protein resides in the cytoplasm. The enzyme catalyses GTP + H2O = GDP + phosphate + H(+). In terms of biological role, GTP hydrolase that promotes the GTP-dependent binding of aminoacyl-tRNA to the A-site of ribosomes during protein biosynthesis. This is Elongation factor Tu from Renibacterium salmoninarum (strain ATCC 33209 / DSM 20767 / JCM 11484 / NBRC 15589 / NCIMB 2235).